The following is a 107-amino-acid chain: Nucleoid-associated protein A1G_07310 (107 aa).

Belongs to the YbaB/EbfC family. As to quaternary structure, homodimer.

It localises to the cytoplasm. The protein localises to the nucleoid. Binds to DNA and alters its conformation. May be involved in regulation of gene expression, nucleoid organization and DNA protection. The protein is Nucleoid-associated protein A1G_07310 of Rickettsia rickettsii (strain Sheila Smith).